We begin with the raw amino-acid sequence, 30 residues long: uncharacterized protein (30 aa).

An N-terminal signal peptide occupies residues Met1–Ser22.

This is an uncharacterized protein from Schizosaccharomyces pombe (strain 972 / ATCC 24843) (Fission yeast).